The primary structure comprises 32 residues: Photosystem II reaction center protein T (32 aa).

The chain crosses the membrane as a helical span at residues 3-23 (ALVYTFLLIGTLMVIFFAVFF).

Belongs to the PsbT family. As to quaternary structure, PSII is composed of 1 copy each of membrane proteins PsbA, PsbB, PsbC, PsbD, PsbE, PsbF, PsbH, PsbI, PsbJ, PsbK, PsbL, PsbM, PsbT, PsbX, PsbY, PsbZ, Psb30/Ycf12, at least 3 peripheral proteins of the oxygen-evolving complex and a large number of cofactors. It forms dimeric complexes.

The protein localises to the plastid. It localises to the chloroplast thylakoid membrane. Found at the monomer-monomer interface of the photosystem II (PS II) dimer, plays a role in assembly and dimerization of PSII. PSII is a light-driven water plastoquinone oxidoreductase, using light energy to abstract electrons from H(2)O, generating a proton gradient subsequently used for ATP formation. This chain is Photosystem II reaction center protein T, found in Thalassiosira pseudonana (Marine diatom).